The primary structure comprises 854 residues: ATP-dependent Clp protease ATP-binding subunit ClpA homolog (854 aa).

A Clp R domain is found at 33 to 175; it reads FERFTEKAVK…RSNIIRMIGE (143 aa). Repeat stretches follow at residues 36–101 and 111–175; these read FTEK…IGRG and FTPR…MIGE. 238–245 provides a ligand contact to ATP; the sequence is GEPGVGKT. Residues 447–482 form the UVR domain; the sequence is DEELRHIQKIKNELIRSGDFEEASQFREREIEVKVQ. Residue 579-586 participates in ATP binding; it reads GPTGVGKT.

Belongs to the ClpA/ClpB family.

The protein localises to the plastid. The protein resides in the chloroplast. Functionally, may interact with a ClpP-like protease involved in degradation of denatured proteins in the chloroplast. The chain is ATP-dependent Clp protease ATP-binding subunit ClpA homolog (clpC) from Cyanidium caldarium (Red alga).